A 366-amino-acid polypeptide reads, in one-letter code: tRNA/tmRNA (uracil-C(5))-methyltransferase (366 aa).

Positions 190, 218, 223, 239, and 299 each coordinate S-adenosyl-L-methionine. Catalysis depends on Cys-324, which acts as the Nucleophile. Residue Glu-358 is the Proton acceptor of the active site.

The protein belongs to the class I-like SAM-binding methyltransferase superfamily. RNA M5U methyltransferase family. TrmA subfamily.

It catalyses the reaction uridine(54) in tRNA + S-adenosyl-L-methionine = 5-methyluridine(54) in tRNA + S-adenosyl-L-homocysteine + H(+). The catalysed reaction is uridine(341) in tmRNA + S-adenosyl-L-methionine = 5-methyluridine(341) in tmRNA + S-adenosyl-L-homocysteine + H(+). In terms of biological role, dual-specificity methyltransferase that catalyzes the formation of 5-methyluridine at position 54 (m5U54) in all tRNAs, and that of position 341 (m5U341) in tmRNA (transfer-mRNA). This is tRNA/tmRNA (uracil-C(5))-methyltransferase from Salmonella choleraesuis (strain SC-B67).